The following is a 394-amino-acid chain: Elongation factor Tu 1 (394 aa).

Residues 10-204 enclose the tr-type G domain; the sequence is KPHVNVGTIG…ALDSYIPEPQ (195 aa). The tract at residues 19-26 is G1; sequence GHVDHGKT. A GTP-binding site is contributed by 19–26; sequence GHVDHGKT. Mg(2+) is bound at residue threonine 26. A G2 region spans residues 60–64; the sequence is GITIN. The segment at 81–84 is G3; that stretch reads DCPG. GTP-binding positions include 81 to 85 and 136 to 139; these read DCPGH and NKCD. The interval 136–139 is G4; the sequence is NKCD. The segment at 174–176 is G5; it reads SAL.

The protein belongs to the TRAFAC class translation factor GTPase superfamily. Classic translation factor GTPase family. EF-Tu/EF-1A subfamily. As to quaternary structure, monomer.

The protein resides in the cytoplasm. The catalysed reaction is GTP + H2O = GDP + phosphate + H(+). GTP hydrolase that promotes the GTP-dependent binding of aminoacyl-tRNA to the A-site of ribosomes during protein biosynthesis. The chain is Elongation factor Tu 1 from Shewanella baltica (strain OS195).